Here is a 164-residue protein sequence, read N- to C-terminus: Phosphopantetheine adenylyltransferase (164 aa).

S10 serves as a coordination point for substrate. ATP is bound by residues 10–11 (SF) and H18. Positions 42, 74, and 88 each coordinate substrate. Residues 89–91 (GLR), E99, and 124–130 (YSFLSSS) contribute to the ATP site.

Belongs to the bacterial CoaD family. As to quaternary structure, homohexamer. It depends on Mg(2+) as a cofactor.

It localises to the cytoplasm. The catalysed reaction is (R)-4'-phosphopantetheine + ATP + H(+) = 3'-dephospho-CoA + diphosphate. The protein operates within cofactor biosynthesis; coenzyme A biosynthesis; CoA from (R)-pantothenate: step 4/5. Reversibly transfers an adenylyl group from ATP to 4'-phosphopantetheine, yielding dephospho-CoA (dPCoA) and pyrophosphate. The polypeptide is Phosphopantetheine adenylyltransferase (Exiguobacterium sp. (strain ATCC BAA-1283 / AT1b)).